We begin with the raw amino-acid sequence, 68 residues long: Basic phospholipase A2 homolog BdipTx-I (68 aa).

Residues Cys-28 and Cys-44 are joined by a disulfide bond.

Belongs to the phospholipase A2 family. Group II subfamily. K49 sub-subfamily. Expressed by the venom gland.

It localises to the secreted. Its function is as follows. Snake venom phospholipase A2 (PLA2) that lacks enzymatic activity. Is myotoxic, induces edema, and causes systemic effects (renal changes that lead to proteinuria) on mice. A model of myotoxic mechanism has been proposed: an apo Lys49-PLA2 is activated by the entrance of a hydrophobic molecule (e.g. fatty acid) at the hydrophobic channel of the protein leading to a reorientation of a monomer. This reorientation causes a transition between 'inactive' to 'active' states, causing alignment of C-terminal and membrane-docking sites (MDoS) side-by-side and putting the membrane-disruption sites (MDiS) in the same plane, exposed to solvent and in a symmetric position for both monomers. The MDoS region stabilizes the toxin on membrane by the interaction of charged residues with phospholipid head groups. Subsequently, the MDiS region destabilizes the membrane with penetration of hydrophobic residues. This insertion causes a disorganization of the membrane, allowing an uncontrolled influx of ions (i.e. calcium and sodium), and eventually triggering irreversible intracellular alterations and cell death. This is Basic phospholipase A2 homolog BdipTx-I from Bothrops diporus (Chaco lancehead).